Here is a 4450-residue protein sequence, read N- to C-terminus: MSTFKKEHVQDMYRLSPMQEGMLFHALLDKDKNAHLVQMSIAIEGIVDVELLSESLNILIDRYDVFRTTFLHEKIKQPLQVVLKERPVQLQFKDISSLDEEKREQAIEQYKYQDGETVFDLTRDPLMRVAIFQTGKVNYQMIWSFHHILMDGWCFNIIFNDLFNIYLSLKEKKPLQLEAVQPYKQFIKWLEKQDKQEALRYWKEHLMNYDQSVTLPKKKAAINNTTYEPAQFRFAFDKVLTQQLLRIANQSQVTLNIVFQTIWGIVLQKYNSTNDVVYGSVVSGRPSEISGIEKMVGLFINTLPLRIQTQKDQSFIELVKTVHQNVLFSQQHEYFPLYEIQNHTELKQNLIDHIMVIENYPLVEELQKNSIMQKVGFTVRDVKMFEPTNYDMTVMVLPRDEISVRLDYNAAVYDIDFIRKIEGHMKEVALCVANNPHVLVQDVPLLTKQEKQHLLVELHDSITEYPDKTIHQLFTEQVEKTPEHVAVVFEDEKVTYRELHERSNQLARFLREKGVKKESIIGIMMERSVEMIVGILGILKAGGAFVPIDPEYPKERIGYMLDSVRLVLTQRHLKDKFAFTKETIVIEDPSISHELTEEIDYINESEDLFYIIYTSGTTGKPKGVMLEHKNIVNLLHFTFEKTNINFSDKVLQYTTCSFDVCYQEIFSTLLSGGQLYLIRKETQRDVEQLFDLVKRENIEVLSFPVAFLKFIFNEREFINRFPTCVKHIITAGEQLVVNNEFKRYLHEHNVHLHNHYGPSETHVVTTYTINPEAEIPELPPIGKPISNTWIYILDQEQQLQPQGIVGELYISGANVGRGYLNNQELTAEKFFADPFRPNERMYRTGDLARWLPDGNIEFLGRADHQVKIRGHRIELGEIEAQLLNCKGVKEAVVIDKADDKGGKYLCAYVVMEVEVNDSELREYLGKALPDYMIPSFFVPLDQLPLTPNGKIDRKSLPNLEGIVNTNAKYVVPTNELEEKLAKIWEEVLGISQIGIQDNFFSLGGHSLKAITLISRMNKECNVDIPLRLLFEAPTIQEISNYINGAKKESYVAIQPVPEQEYYPVSSVQKRMFILNEFDRSGTAYNLPGVMFLDGKLNYRQLEAAVKKLVERHEALRTSFHSINGEPVQRVHQNVELQIAYSESTEDQVERIIAEFMQPFALEVAPLLRVGLVKLEAERHLFIMDMHHIISDGVSMQIMIQEIADLYKEKELPTLGIQYKDFTVWHNRLLQSDVIEKQEAYWLNVFTEEIPVLNLPTDYPRPTIQSFDGKRFTFSTGKQLMDDLYKVATETGTTLYMVLLAAYNVFLSKYSGQDDIVVGTPIAGRSHADVENMLGMFVNTLAIRSRLNNEDTFKDFLANVKQTALHAYENPDYPFDTLVEKLGIQRDLSRNPLFDTMFVLQNTDRKSFEVEQITITPYVPNSRHSKFDLTLEVSEEQNEILLCLEYCTKLFTDKTVERMAGHFLQILHAIVGNPTIIISEIEILSEEEKQHILFEFNDTKTTYPHMQTIQGLFEEQVEKTPDHVAVGWKDQALTYRELNERANQVARVLRQKGVQPDNIVGLLVERSPEMLVGIMGILKAGGAYLPLDPEYPADRISYMIQDCGVRIMLTQQHLLSLVHDEFDCVILDEDSLYKGDSSNLAPVNQAGDLAYIMYTSGSTGKPKGVMVEHRNVIRLVKNTNYVQVREDDRIIQTGAIGFDALTFEVFGSLLHGAELYPVTKDVLLDAEKLHKFLQANQITIMWLTSPLFNQLSQGTEEMFAGLRSLIVGGDALSPKHINNVKRKCPNLTMWNGYGPTENTTFSTCFLIDKEYDDNIPIGKAISNSTVYIMDRYGQLQPVGVPGELCVGGDGVARGYMNQPALTEEKFVPNPFAPGERMYRTGDLARWLPDGTIEYLGRIDQQVKIRGYRIEPGEIETLLVKHKKVKESVIMVVEDNNGQKALCAYYVPEEEVTVSELREYIAKELPVYMVPAYFVQIEQMPLTQNGKVNRSALPKPDGEFGTATEYVAPSSDIEMKLAEIWHNVLGVNKIGVLDNFFELGGHSLRAMTMISQVHKEFDVELPLKVLFETPTISALAQYIADGEKGMYLAIQPVTPQDYYPVSSAQKRMYILYEFEGAGITYNVPNVMFIEGKLDYQRFEYAIKSLINRHEALRTSFYSLNGEPVQRVHQNVELQIAYSEAKEDEIEQIVESFVQPFDLEIAPALRVGLVKLASDRHLFLMDMHHIISDGVSMQIITKEIADLYKGKELAELHIQYKDFAVWQNEWFQSAALEKQKTYWLNTFAEDIPVLNLSTDYPRPTIQSFEGDIVTFSAGKQLAEELKRLATETGTTLYMLLLAAYNVLLHKYSGQEEIVVGTPIAGRSHADVENIVGMFVNTLALKNTPIAVRTFHEFLLEVKQNALEAFENQDYPFENLIEKLQVRRDLSRNPLFDTMFSLSNIDEQVEIGIEGLSFSPYEMQYWIAKFDISFDILEKQDDIQFYFNYCTNLFKKETIERLATHFMHILQEIVINPEIKLCEINMLSEEEQQRVLYDFNGTDATYATNKIFHELFEEQVEKTPDHIAVIDEREKLSYQELNAKANQLARVLRQKGVQPNSMVGIMVDRSLDMIVGMLGVLKAGGAYVPIDIDYPQERISYMMEDSGAALLLTQQKLTQQIAFSGDILYLDQEEWLHEEASNLEPIARPQDIAYIIYTSGTTGKPKGVMIEHQSYVNVAMAWKDAYRLDTFPVRLLQMASFAFDVSAGDFARALLTGGQLIVCPNEVKMDPASLYAIIKKYDITIFEATPALVIPLMEYIYEQKLDISQLQILIVGSDSCSMEDFKTLVSRFGSTIRIVNSYGVTEACIDSSYYEQPLSSLHVTGTVPIGKPYANMKMYIMNQYLQIQPVGVIGELCIGGAGVARGYLNRPDLTAEKFVPNPFVPGEKLYRTGDLARWMPDGNVEFLGRNDHQVKIRGIRIELGEIEAQLRKHDSIKEATVIAREDHMKEKYLCAYMVTEGEVNVAELRAYLATDLPAAMIPSYFVSLEAMPLTANGKIDKRSLPEPDGSISIGTEYVAPRTMLEGKLEEIWKDVLGLQRVGIHDDFFTIGGHSLKAMAVISQVHKECQTEVPLRVLFETPTIQGLAKYIEETDTEQYMAIQPVSGQDYYPVSSAQKRMFIVNQFDGVGISYNMPSIMLIEGKLERTRLESAFKRLIERHESLRTSFEIINGKPVQKIHEEADFNMSYQVASNEQVEKMIDEFIQPFDLSVAPLLRVELLKLEEDRHVLIFDMHHIISDGISSNILMKELGELYQGNALPELRIQYKDFAVWQNEWFQSEAFKKQEEYWVNVFADERPILDIPTDYPRPMQQSFDGAQLTFGTGKQLMDGLYRVATETGTTLYMVLLAAYNVLLSKYSGQEDIIVGTPIVGRSHTDLENIVGMFVNTLAMRNKPEGEKTFKAFVSEIKQNALAAFENQDYPFEELIEKLEIQRDLSRNPLFDTLFSLQNIGEESFELAELTCKPFDLVSKLEHAKFDLSLVAVEKEEEIAFGLQYCTKLYKEKTVEQLAQHFIQIVKAIVENPDVKLSDIDMLSEEEKKQIMLEFNDTKIQYPQNQTIQELFEEQVKKTPEHIAIVWEGQALTYHELNIKANQLARVLREKGVTPNHPVAIMTERSLEMIVGIFSILKAGGAYVPIDPAYPQERIQYLLEDSGATLLLTQSHVLNKLPVDIEWLDLTDEQNYVEDGTNLPFMNQSTDLAYIIYTSGTTGKPKGVMIEHQSIINCLQWRKEEYEFGPGDTALQVFSFAFDGFVASLFAPILAGATSVLPKEEEAKDPVALKKLIASEEITHYYGVPSLFSAILDVSSSKDLQNLRCVTLGGEKLPAQIVKKIKEKNKEIEVNNEYGPTENSVVTTIMRDIQVEQEITIGCPLSNVDVYIVNCNHQLQPVGVVGELCIGGQGLARGYLNKPELTADKFVVNPFVPGERMYKTGDLAKWRSDGMIEYVGRVDEQVKVRGYRIELGEIESAILEYEKIKEAVVIVSEHTASEQMLCAYIVGEEDVLTLDLRSYLAKLLPSYMIPNYFIQLDSIPLTPNGKVDRKALPEPQTIGLMAREYVAPRNEIEAQLVLIWQEVLGIELIGITDNFFELGGHSLKATLLVAKIYEYMQIEMPLNVVFKHSTIMKIAEYITHQESENNVHQPILVNVEADREALSLNGEKQRKNIELPILLNEETDRNVFLFAPIGAQGVFYKKLAEQIPTASLYGFDFIEDDDRIQQYIESMIQTQSDGQYVLIGYSSGGNLAFEVAKEMERQGYSVSDLVLFDVYWKGKVFEQTKEEEEENIKIIMEELRENPGMFNMTREDFELYFANEFVKQSFTRKMRKYMSFYTQLVNYGEVEATIHLIQAEFEEEKIDENEKADEEEKTYLEEKWNEKAWNKAAKRFVKYNGYGAHSNMLGGDGLERNSSILKQILQGTFVVK.

The tract at residues 467–1044 is domain 1 (proline-activating); that stretch reads DKTIHQLFTE…IQEISNYING (578 aa). 4 Carrier domains span residues 971–1046, 2006–2081, 3051–3126, and 4089–4164; these read VPTN…NGAK, APSS…ADGE, APRT…EETD, and APRN…THQE. O-(pantetheine 4'-phosphoryl)serine is present on residues S1006, S2041, S3086, and S4124. Positions 1521-2080 are domain 2 (valine-activating); sequence DHVAVGWKDQ…SALAQYIADG (560 aa). The domain 3 (ornithine-activating) stretch occupies residues 2538–3134; sequence YATNKIFHEL…TDTEQYMAIQ (597 aa). The tract at residues 3590–4172 is domain 4 (leucine-activating); the sequence is IQELFEEQVK…QESENNVHQP (583 aa).

It belongs to the ATP-dependent AMP-binding enzyme family. In terms of assembly, large multienzyme complex of GrsA and GrsB. It depends on pantetheine 4'-phosphate as a cofactor.

Its pathway is antibiotic biosynthesis; gramicidin S biosynthesis. This protein is a multifunctional enzyme, able to activate and polymerize the amino acids Pro, Val, Orn and Leu. Activation sites for these AA consist of individual domains. This is Gramicidin S synthase 2 (grsB) from Brevibacillus brevis (Bacillus brevis).